Here is a 149-residue protein sequence, read N- to C-terminus: Large ribosomal subunit protein bL9 (149 aa).

The protein belongs to the bacterial ribosomal protein bL9 family.

In terms of biological role, binds to the 23S rRNA. This Leptospira borgpetersenii serovar Hardjo-bovis (strain JB197) protein is Large ribosomal subunit protein bL9.